The chain runs to 176 residues: Endoribonuclease YbeY (176 aa).

The Zn(2+) site is built by His-139, His-143, and His-149.

It belongs to the endoribonuclease YbeY family. Requires Zn(2+) as cofactor.

Its subcellular location is the cytoplasm. Its function is as follows. Single strand-specific metallo-endoribonuclease involved in late-stage 70S ribosome quality control and in maturation of the 3' terminus of the 16S rRNA. This Acaryochloris marina (strain MBIC 11017) protein is Endoribonuclease YbeY.